Consider the following 432-residue polypeptide: Adenylosuccinate synthetase (432 aa).

Residues 13–19 and 41–43 contribute to the GTP site; these read GDEGKGK and GHT. The active-site Proton acceptor is aspartate 14. Mg(2+) contacts are provided by aspartate 14 and glycine 41. IMP contacts are provided by residues 14-17, 39-42, threonine 130, arginine 144, glutamine 225, threonine 240, and arginine 304; these read DEGK and NAGH. The active-site Proton donor is histidine 42. 300 to 306 provides a ligand contact to substrate; sequence ATTGRRR. Residues arginine 306, 332–334, and 415–417 contribute to the GTP site; these read KLD and STG.

This sequence belongs to the adenylosuccinate synthetase family. Homodimer. Mg(2+) serves as cofactor.

The protein localises to the cytoplasm. The enzyme catalyses IMP + L-aspartate + GTP = N(6)-(1,2-dicarboxyethyl)-AMP + GDP + phosphate + 2 H(+). It participates in purine metabolism; AMP biosynthesis via de novo pathway; AMP from IMP: step 1/2. Functionally, plays an important role in the de novo pathway of purine nucleotide biosynthesis. Catalyzes the first committed step in the biosynthesis of AMP from IMP. This chain is Adenylosuccinate synthetase, found in Baumannia cicadellinicola subsp. Homalodisca coagulata.